The primary structure comprises 107 residues: U20-lycotoxin-Ls1b (107 aa).

The N-terminal stretch at methionine 1–alanine 30 is a signal peptide. One can recognise a WAP domain in the interval glycine 31 to serine 76. Disulfide bonds link cysteine 34-cysteine 64, cysteine 42-cysteine 68, cysteine 51-cysteine 63, cysteine 52-cysteine 90, and cysteine 57-cysteine 72.

The protein belongs to the venom protein 11 family. 02 (wap-2) subfamily. Contains 5 disulfide bonds. In terms of tissue distribution, expressed by the venom gland.

The protein resides in the secreted. In terms of biological role, has antibacterial activity. This chain is U20-lycotoxin-Ls1b, found in Lycosa singoriensis (Wolf spider).